The chain runs to 181 residues: Acireductone dioxygenase (181 aa).

Fe(2+)-binding residues include His97, His99, Glu103, and His141. Residues His97, His99, Glu103, and His141 each coordinate Ni(2+).

It belongs to the acireductone dioxygenase (ARD) family. Monomer. Fe(2+) serves as cofactor. The cofactor is Ni(2+).

It carries out the reaction 1,2-dihydroxy-5-(methylsulfanyl)pent-1-en-3-one + O2 = 3-(methylsulfanyl)propanoate + CO + formate + 2 H(+). The catalysed reaction is 1,2-dihydroxy-5-(methylsulfanyl)pent-1-en-3-one + O2 = 4-methylsulfanyl-2-oxobutanoate + formate + 2 H(+). The protein operates within amino-acid biosynthesis; L-methionine biosynthesis via salvage pathway; L-methionine from S-methyl-5-thio-alpha-D-ribose 1-phosphate: step 5/6. Catalyzes 2 different reactions between oxygen and the acireductone 1,2-dihydroxy-3-keto-5-methylthiopentene (DHK-MTPene) depending upon the metal bound in the active site. Fe-containing acireductone dioxygenase (Fe-ARD) produces formate and 2-keto-4-methylthiobutyrate (KMTB), the alpha-ketoacid precursor of methionine in the methionine recycle pathway. Ni-containing acireductone dioxygenase (Ni-ARD) produces methylthiopropionate, carbon monoxide and formate, and does not lie on the methionine recycle pathway. The sequence is that of Acireductone dioxygenase from Pseudomonas syringae pv. syringae (strain B728a).